The sequence spans 514 residues: Pentatricopeptide repeat-containing protein At4g26800 (514 aa).

PPR repeat units lie at residues 122–156 (DLYT…GIEP), 157–191 (DIVT…GIKR), 192–226 (DVVV…GISP), 227–261 (NVVT…KINP), 262–296 (NVIT…SIDP), 297–331 (NVFT…GCTP), 332–366 (NVVT…GVAA), 367–401 (NTVS…GLIP), 402–436 (NIRS…RNDL), 437–471 (DIIT…RVEP), and 472–510 (DFKA…ESAP).

Belongs to the PPR family. P subfamily.

In Arabidopsis thaliana (Mouse-ear cress), this protein is Pentatricopeptide repeat-containing protein At4g26800.